A 333-amino-acid polypeptide reads, in one-letter code: UPF0284 protein TGAM_0534 (333 aa).

This sequence belongs to the UPF0284 family.

This chain is UPF0284 protein TGAM_0534, found in Thermococcus gammatolerans (strain DSM 15229 / JCM 11827 / EJ3).